The chain runs to 257 residues: Snake venom serine protease CL5 (257 aa).

A signal peptide spans Met1 to Ala18. Positions Gln19–Leu24 are excised as a propeptide. In terms of domain architecture, Peptidase S1 spans Val25 to Ala248. 5 cysteine pairs are disulfide-bonded: Cys31–Cys162, Cys49–Cys65, Cys141–Cys209, Cys173–Cys188, and Cys199–Cys224. The active-site Charge relay system is the His64. N-linked (GlcNAc...) asparagine glycans are attached at residues Asn78 and Asn102. Asp109 acts as the Charge relay system in catalysis. Asn153 and Asn169 each carry an N-linked (GlcNAc...) asparagine glycan. The active-site Charge relay system is Ser203. The N-linked (GlcNAc...) asparagine glycan is linked to Asn250.

Belongs to the peptidase S1 family. Snake venom subfamily. In terms of assembly, monomer. Expressed by the venom gland.

It localises to the secreted. In terms of biological role, snake venom serine protease that may act in the hemostasis system of the prey. In Trimeresurus stejnegeri (Chinese green tree viper), this protein is Snake venom serine protease CL5.